Reading from the N-terminus, the 184-residue chain is ATP-dependent protease subunit HslV (184 aa).

The active site involves threonine 12. Na(+)-binding residues include alanine 166, cysteine 169, and threonine 172.

The protein belongs to the peptidase T1B family. HslV subfamily. In terms of assembly, a double ring-shaped homohexamer of HslV is capped on each side by a ring-shaped HslU homohexamer. The assembly of the HslU/HslV complex is dependent on binding of ATP.

The protein localises to the cytoplasm. It catalyses the reaction ATP-dependent cleavage of peptide bonds with broad specificity.. With respect to regulation, allosterically activated by HslU binding. In terms of biological role, protease subunit of a proteasome-like degradation complex believed to be a general protein degrading machinery. In Brucella abortus (strain S19), this protein is ATP-dependent protease subunit HslV.